Reading from the N-terminus, the 302-residue chain is MNNERLRRTMMFVPGNNPAMVKDAGIFGADSIMFDLEDAVSLAEKDSARYLVYEALQTVDYGSSELVVRINGLDTPFYKNDIKAMVKAGIDVIRLPKVETAAMMHELESLITDAEKEFGRPVGTTHMMAAIESALGVVNAVEIANASDRMIGIALSAEDYTTDMKTHRYPDGQELLYARNVILHAARAAGIAAFDTVFTNLNDEEGFYRETQLIHQLGFDGKSLINPRQIEMVNKVYAPTEKEINNAQNVIAAIEEAKQKGSGVISMNGQMVDRPVVLRAQRVMKLANANHLVDSEGNYIEK.

Residues R69 and E132 each coordinate substrate. Residues E132 and D159 each contribute to the Mg(2+) site.

It belongs to the HpcH/HpaI aldolase family. Citrate lyase beta subunit subfamily. Oligomer with a subunit composition of (alpha,beta,gamma)6. It depends on Mg(2+) as a cofactor.

It is found in the cytoplasm. The catalysed reaction is citrate = oxaloacetate + acetate. It catalyses the reaction (3S)-citryl-CoA = oxaloacetate + acetyl-CoA. In terms of biological role, represents a citryl-ACP lyase. The sequence is that of Citrate lyase subunit beta (citE) from Leuconostoc mesenteroides subsp. cremoris.